The chain runs to 47 residues: PhoP/PhoQ regulator MgrB (47 aa).

Residues Trp-6 to Ile-26 form a helical membrane-spanning segment.

Belongs to the MgrB family. In terms of assembly, may form homooligomers. Probably interacts with the periplasmic domain of PhoQ.

The protein localises to the cell inner membrane. In terms of biological role, phoP-regulated transcription is redox-sensitive, being activated when the periplasm becomes more reducing. MgrB acts between DsbA/DsbB and PhoP/PhoQ in this pathway. Represses PhoP/PhoQ signaling, possibly by binding to the periplasmic domain of PhoQ, altering its activity and that of downstream effector PhoP. The sequence is that of PhoP/PhoQ regulator MgrB from Salmonella gallinarum (strain 287/91 / NCTC 13346).